The primary structure comprises 186 residues: MNVSKYVAIFSFVFIQLISVGKVFANADERMTTFRENIAQTWQQPEHYDLYIPAITWHARFAYDKEKTDRYNERPWGGGFGLSRWDEKGNWHGLYAMAFKDSWNKWEPIAGYGWESTWRPLADENFHLGLGFTAGVTARDNWNYIPLPVLLPLASVGYGPVTFQMTYIPGTYNNGNVYFAWMRFQF.

Positions 1–25 (MNVSKYVAIFSFVFIQLISVGKVFA) are cleaved as a signal peptide. Residues His-58, Asp-101, and Ser-102 contribute to the active site.

The protein belongs to the lipid A palmitoyltransferase family. In terms of assembly, homodimer.

It localises to the cell outer membrane. The enzyme catalyses a lipid A + a 1,2-diacyl-sn-glycero-3-phosphocholine = a hepta-acyl lipid A + a 2-acyl-sn-glycero-3-phosphocholine. It catalyses the reaction a lipid IVA + a 1,2-diacyl-sn-glycero-3-phosphocholine = a lipid IVB + a 2-acyl-sn-glycero-3-phosphocholine. The catalysed reaction is a lipid IIA + a 1,2-diacyl-sn-glycero-3-phosphocholine = a lipid IIB + a 2-acyl-sn-glycero-3-phosphocholine. Its function is as follows. Transfers a fatty acid residue from the sn-1 position of a phospholipid to the N-linked hydroxyfatty acid chain on the proximal unit of lipid A or its precursors. In Shigella flexneri serotype X (strain 2002017), this protein is Lipid A acyltransferase PagP.